A 495-amino-acid chain; its full sequence is MSIGFDRDLYIKMQSRHINERREQIGGKLYLEMGGKLFDDMHASRVLPGFTPDNKIAMLTELKDELEILVAINAKDLERKKTRADLDISYEEDVLRLIDVFRELGFLAEHVVLTQLEDDNYQALTFKQRLERLGLKVAVHRVIPGYPTDARRIVSEDGFGINEYVETTRNLVVVTAPGPGSGKLATCLSQIYGDHQRGIKSGYAKFETFPIWNLPLEHPVNLAYEAATADLDDINIIDPFHLAAYDTKATSYNRDVEVFPLLKTMLEMLSGSSPYKSPTDMGVNMVGSAIIDDAACQEAARQEIVRRYFKALVDERREEQDDTISARIAIVMSKAGCTVEDRRVVARALDVEESTGAPGCAIELNDGRLVTGKTSELLGCSAAMVLNALKELAGIDRSVDLLSPESIEPIQSLKTQHLGSRNPRLHTDEVLIALSVSAANSETARRALDELKNLRGCDVHTTTILGSVDEGIFRNLGVLVTSEPKYQRKALYRKR.

The protein belongs to the UPF0371 family.

The sequence is that of UPF0371 protein cgR_2887 from Corynebacterium glutamicum (strain R).